The following is an 87-amino-acid chain: Acyl-CoA-binding protein (87 aa).

The region spanning 2-87 (VSQLFEEKAK…VDQLIAKYSS (86 aa)) is the ACB domain. An acyl-CoA contacts are provided by residues 29-33 (YALYK), lysine 51, and lysine 55. A Glycyl lysine isopeptide (Lys-Gly) (interchain with G-Cter in ubiquitin) cross-link involves residue lysine 51. Lysine 72 is covalently cross-linked (Glycyl lysine isopeptide (Lys-Gly) (interchain with G-Cter in ubiquitin)). Position 74 (tyrosine 74) interacts with an acyl-CoA.

Belongs to the ACBP family.

Binds medium- and long-chain acyl-CoA esters with very high affinity and may function as an intracellular carrier of acyl-CoA esters. Enhances the in vitro activity of the ceramide synthase complex. In Saccharomyces cerevisiae (strain ATCC 204508 / S288c) (Baker's yeast), this protein is Acyl-CoA-binding protein (ACB1).